We begin with the raw amino-acid sequence, 61 residues long: Metallothionein-1A (61 aa).

M1 is modified (N-acetylmethionine). The segment at 1–29 (MDPNCSCATGGSCTCTGSCKCKECKCTSC) is beta. 18 residues coordinate a divalent metal cation: C5, C7, C13, C15, C19, C21, C24, C26, C29, C33, C34, C36, C37, C41, C44, C48, C50, and C57. Residues 30–61 (KKSCCSCCPMSCAKCAQGCICKGASEKCSCCA) form an alpha region. S58 bears the Phosphoserine mark. A divalent metal cation is bound by residues C59 and C60.

It belongs to the metallothionein superfamily. Type 1 family. In terms of assembly, monomer.

In terms of biological role, metallothioneins have a high content of cysteine residues that bind various heavy metals; these proteins are transcriptionally regulated by both heavy metals and glucocorticoids. This is Metallothionein-1A (MT1A) from Homo sapiens (Human).